Consider the following 78-residue polypeptide: Exodeoxyribonuclease 7 small subunit (78 aa).

This sequence belongs to the XseB family. Heterooligomer composed of large and small subunits.

It localises to the cytoplasm. It catalyses the reaction Exonucleolytic cleavage in either 5'- to 3'- or 3'- to 5'-direction to yield nucleoside 5'-phosphates.. In terms of biological role, bidirectionally degrades single-stranded DNA into large acid-insoluble oligonucleotides, which are then degraded further into small acid-soluble oligonucleotides. The chain is Exodeoxyribonuclease 7 small subunit from Nocardia farcinica (strain IFM 10152).